The primary structure comprises 702 residues: MRYSHPLVPLSFMTTALVTTALPYANGPLHLGHLVGYIQADIWVRARRLGGHNTWFVCADDTHGTPIMLAAEKAGMPPEAFIATTQASHERDFAAFNVAFDHYDSTHSPVNRHLTEQSYLTLKQAGHITCRSVAQFYDPAKGMFLPDRYVKGTCPNCGATDQYGDNCEACGATYDPTELKNPYSVISGATPELRDSEHFFFEVAHFDTFLRHWLSGDVALPSVKNKLKEWLDAKGGLRPWDISRDAPYFGFEIPDQPGKYFYVWLDAPIGYLCSFKTLCTRIGEDFDTHLRSGTTTELHHFIGKDIVNFHALFWPAVLHGTGRCAPTRLHVNGYLTVDGAKMSKSRGTFIMARTYLDAGLEPDALRYYFAAKSSGDVDDLDLNLSDFVARVNADLVGKLVNLASRCASFIGTRFNGQLADILPDRIQYDQFVAALTPIRDAYERNDTASAIRQTMQLADEANKYIDETKPWIIAKQHHADAQLHAVCTQGLNLFRVLITALKPILPHTSIQAETFLAAPVTTWQDVNQPLTGGHTIQPYSPLFTRIDKKIIEVMINASKDTLAPPPASAKQQNASMSNTAPPPTAEEPETTAPTIGIDDFAKLDLRIGKVLVCEYVEGSDKLLRFELDAGPLGKRQIFSGIRASYSNPETLIGRNVVFIANLAPRKMRFGISQGMILSAGFDSGTLALLDADSSAQPGMPVR.

The 'HIGH' region motif lies at 23–33 (PYANGPLHLGH). The Zn(2+) site is built by C154, C157, C167, and C170. A 'KMSKS' region motif is present at residues 341–345 (KMSKS). K344 lines the ATP pocket. Residues 562 to 593 (LAPPPASAKQQNASMSNTAPPPTAEEPETTAP) form a disordered region. Residues 569 to 578 (AKQQNASMSN) are compositionally biased toward polar residues. The 104-residue stretch at 599–702 (DFAKLDLRIG…SSAQPGMPVR (104 aa)) folds into the tRNA-binding domain.

The protein belongs to the class-I aminoacyl-tRNA synthetase family. MetG type 1 subfamily. In terms of assembly, homodimer. Zn(2+) is required as a cofactor.

It localises to the cytoplasm. It carries out the reaction tRNA(Met) + L-methionine + ATP = L-methionyl-tRNA(Met) + AMP + diphosphate. In terms of biological role, is required not only for elongation of protein synthesis but also for the initiation of all mRNA translation through initiator tRNA(fMet) aminoacylation. This is Methionine--tRNA ligase from Xylella fastidiosa (strain M12).